The chain runs to 395 residues: NADH-quinone oxidoreductase subunit D (395 aa).

This sequence belongs to the complex I 49 kDa subunit family. In terms of assembly, NDH-1 is composed of 14 different subunits. Subunits NuoB, C, D, E, F, and G constitute the peripheral sector of the complex.

Its subcellular location is the cell inner membrane. It carries out the reaction a quinone + NADH + 5 H(+)(in) = a quinol + NAD(+) + 4 H(+)(out). Functionally, NDH-1 shuttles electrons from NADH, via FMN and iron-sulfur (Fe-S) centers, to quinones in the respiratory chain. The immediate electron acceptor for the enzyme in this species is believed to be ubiquinone. Couples the redox reaction to proton translocation (for every two electrons transferred, four hydrogen ions are translocated across the cytoplasmic membrane), and thus conserves the redox energy in a proton gradient. This chain is NADH-quinone oxidoreductase subunit D, found in Anaplasma phagocytophilum (strain HZ).